Reading from the N-terminus, the 75-residue chain is RNA-binding protein Hfq (75 aa).

The 61-residue stretch at 9 to 69 folds into the Sm domain; sequence DQFLNQLRKE…ISTFAPERNI (61 aa).

This sequence belongs to the Hfq family. Homohexamer.

Functionally, RNA chaperone that binds small regulatory RNA (sRNAs) and mRNAs to facilitate mRNA translational regulation in response to envelope stress, environmental stress and changes in metabolite concentrations. Also binds with high specificity to tRNAs. In Geobacillus kaustophilus (strain HTA426), this protein is RNA-binding protein Hfq.